Here is a 197-residue protein sequence, read N- to C-terminus: Translation machinery-associated protein 22 (197 aa).

Residues I103–Y174 form the SUI1 domain.

Belongs to the DENR family. Interacts with the 40S ribosomal subunit.

It localises to the cytoplasm. The polypeptide is Translation machinery-associated protein 22 (tma22) (Botryotinia fuckeliana (strain B05.10) (Noble rot fungus)).